Consider the following 318-residue polypeptide: MYLINVLSLIIPILLAVAFLTLLERKILGYMQLRKGPNIVGPYGLLQPIADAIKLFIKEPLRPATSSKLMFTLAPTLALTLALSLWIPIPMPYPLVNLNLGVLFILAMSSLAVYSILWSGWASNSKYALIGALRAVAQTISYEVTLAIILLSIMMTNGSFTLSTLTTTQEHMWLIFPLWPLAMMWFISTLAETNRAPFDLTEGESELVSGFNVEYAAGPFALFFLAEYANIIMMNALTAILFFGAMHNPMFPELHTLNLITKTLILTMMFLWVRASYPRFRYDQLMHLLWKSFLPLTLALCMLHVSAPATFAGVPPHM.

8 helical membrane-spanning segments follow: residues 3–23 (LINV…LTLL), 69–89 (LMFT…WIPI), 100–120 (LGVL…LWSG), 135–155 (AVAQ…SIMM), 171–191 (HMWL…STLA), 223–243 (FFLA…ILFF), 253–273 (ELHT…FLWV), and 293–313 (FLPL…TFAG).

This sequence belongs to the complex I subunit 1 family.

The protein localises to the mitochondrion inner membrane. It carries out the reaction a ubiquinone + NADH + 5 H(+)(in) = a ubiquinol + NAD(+) + 4 H(+)(out). In terms of biological role, core subunit of the mitochondrial membrane respiratory chain NADH dehydrogenase (Complex I) that is believed to belong to the minimal assembly required for catalysis. Complex I functions in the transfer of electrons from NADH to the respiratory chain. The immediate electron acceptor for the enzyme is believed to be ubiquinone. In Dasypus novemcinctus (Nine-banded armadillo), this protein is NADH-ubiquinone oxidoreductase chain 1 (MT-ND1).